A 331-amino-acid chain; its full sequence is Ribosomal RNA small subunit methyltransferase H (331 aa).

Residues 38-40, Asp-56, Phe-83, Asp-100, and Gln-107 contribute to the S-adenosyl-L-methionine site; that span reads GGY. The segment at 287–331 is disordered; sequence DEAELAENPRARSARLRVGVRTDAPAGKVDPQALGTPLIPKKGRR.

Belongs to the methyltransferase superfamily. RsmH family.

It localises to the cytoplasm. The enzyme catalyses cytidine(1402) in 16S rRNA + S-adenosyl-L-methionine = N(4)-methylcytidine(1402) in 16S rRNA + S-adenosyl-L-homocysteine + H(+). Its function is as follows. Specifically methylates the N4 position of cytidine in position 1402 (C1402) of 16S rRNA. The sequence is that of Ribosomal RNA small subunit methyltransferase H from Cereibacter sphaeroides (strain KD131 / KCTC 12085) (Rhodobacter sphaeroides).